Consider the following 1167-residue polypeptide: Outer membrane protein SlpA (1167 aa).

The signal sequence occupies residues 1 to 22 (MKKSLIALTTALSFGLAAAQTA). Topologically, residues 23–254 (APVSAPQVPA…RIAALERNAF (232 aa)) are periplasmic. Residues 29-92 (QVPALTDVPA…DQMRDGETPA (64 aa)) form the SLH domain. The beta stranded transmembrane segment at 255–268 (SVKPSLTIGYSVSR) threads the bilayer. Topologically, residues 269–377 (TSRNFDVDRL…RNGFGFNNLA (109 aa)) are extracellular. Cu(2+) is bound by residues D274, D276, R305, F308, D310, and E381. Residues 378–403 (RYKEGSTDIGISLGFDTSGQFSQVTS) form a beta stranded membrane-spanning segment. Residues 404–416 (GTGGSLFSTAGRL) are Periplasmic-facing. A beta stranded membrane pass occupies residues 417 to 428 (QVNQIDLNFGLV). Topologically, residues 429–471 (TGLPSDAYVDTNGNGKKDDGEATGRGTYLGSGGTAAILRDPAG) are extracellular. D438, N442, K444, D446, and E449 together coordinate Fe(3+). A beta stranded membrane pass occupies residues 472–490 (NVYRPVFFRFKNATTQFSV). Residues 491 to 494 (GNNP) lie on the Periplasmic side of the membrane. Residues 495 to 500 (VIVTLG) form a beta stranded membrane-spanning segment. Residues 501 to 519 (QQQKFYFSDYVFDNNYDGR) are Extracellular-facing. Cu(2+) contacts are provided by D513 and N515. The chain crosses the membrane as a beta stranded span at residues 520 to 528 (GDGFTVTVD). Topologically, residues 529-540 (GSNVPVIGAWKP) are periplasmic. Residues 541–549 (QIKGVYGSR) traverse the membrane as a beta stranded segment. Cu(2+) contacts are provided by R549, G551, D553, and G559. Residues 550 to 561 (SGLDGTAEAGYG) lie on the Extracellular side of the membrane. A beta stranded membrane pass occupies residues 562–571 (VYYRGVRAQI). At 572–577 (TPVGTL) the chain is on the periplasmic side. A beta stranded transmembrane segment spans residues 578–588 (TAGIHYAQEGR). Residues 589 to 601 (DMFGAAQNTTSTP) are Extracellular-facing. A beta stranded membrane pass occupies residues 602 to 615 (SDVTTYGADLHGKA). At 616–617 (FG) the chain is on the periplasmic side. A beta stranded membrane pass occupies residues 618–630 (VELHSEYATSRVR). S622 is a deinoxanthin binding site. The Extracellular segment spans residues 631 to 638 (PNTANAAV). Residues 639 to 649 (QTSNAFYARVA) form a beta stranded membrane-spanning segment. At 650 to 670 (TRKDNLAFDLNTPAAKFGNDT) the chain is on the periplasmic side. Residues 671–682 (FGVSLYDLNYRK) traverse the membrane as a beta stranded segment. At 683 to 753 (IDAGYNNVAG…GTVVATNTKI (71 aa)) the chain is on the extracellular side. G716 is a Cu(2+) binding site. The beta stranded transmembrane segment at 754 to 766 (GQMGFGVKAAANL) threads the bilayer. Over 767–768 (GP) the chain is Periplasmic. A beta stranded transmembrane segment spans residues 769-779 (VAIGGYYDTST). Over 780–788 (GANGDNANR) the chain is Extracellular. Residues 789–798 (MTEAGGSAKV) form a beta stranded membrane-spanning segment. Over 799 to 802 (AYSI) the chain is Periplasmic. A beta stranded transmembrane segment spans residues 803-814 (FSLRGTYNTLDS). Residues 815–831 (NRPQIYRDAAGTQIIGD) are Extracellular-facing. The chain crosses the membrane as a beta stranded span at residues 832–843 (AKVRRYAVQADV). Residues 844-848 (TPGLG) lie on the Periplasmic side of the membrane. A beta stranded membrane pass occupies residues 849-860 (LFVGAYYRDVNV). At 861–931 (NGVRSTTDRG…DQSRTATCFT (71 aa)) the chain is on the extracellular side. The chain crosses the membrane as a beta stranded span at residues 932 to 940 (SYGVEAGHA). Over 941-949 (GDNANALVK) the chain is Periplasmic. Residues 950-960 (DLFFRVGYSRV) form a beta stranded membrane-spanning segment. The Extracellular segment spans residues 961-976 (YVPTTATATTGDFSGS). Residues 977-988 (VTYGDARYDRKV) traverse the membrane as a beta stranded segment. The Periplasmic segment spans residues 989–990 (GV). A beta stranded transmembrane segment spans residues 991-1002 (ANVRLAGSFSTT). Topologically, residues 1003–1014 (NTQLDSRPAGTR) are extracellular. The beta stranded transmembrane segment at 1015–1023 (GAVGLIVRT) threads the bilayer. The Periplasmic portion of the chain corresponds to 1024–1032 (DPLENVPFR). Residues 1033–1046 (PQFNGQVGYYTADN) form a beta stranded membrane-spanning segment. The Extracellular segment spans residues 1047–1052 (RVAAGN). The beta stranded transmembrane segment at 1053–1066 (YNANATKYGAGVVL) threads the bilayer. Over 1067–1073 (NDFLLPQ) the chain is Periplasmic. The chain crosses the membrane as a beta stranded span at residues 1074-1086 (TKIGVRYDGYMAQ). At 1087–1108 (NRQYTPFDGDGTQGYFSDANNN) the chain is on the extracellular side. Residues 1109 to 1122 (RRTNLNGVYVEGAY) form a beta stranded membrane-spanning segment. Residues 1123–1124 (QD) lie on the Periplasmic side of the membrane. Residues 1125–1138 (LIFSYGTYTLSQKD) form a beta stranded membrane-spanning segment. The Extracellular portion of the chain corresponds to 1139–1153 (LNGVEYGSGINNGQP). The chain crosses the membrane as a beta stranded span at residues 1154 to 1166 (ARGQTFKISYKVN). Residue F1167 is a topological domain, periplasmic.

Homotrimer. Part of a heterooligomeric complex resulting in the main assembly named S-layer deinoxanthin-binding complex (SDBC) which is composed of six different subunits, namely SlpA, DR_2310, DR_0505, DR_A0283, DR_A0282, and DR_A0281.

Its subcellular location is the cell envelope. It is found in the cell outer membrane. It carries out the reaction L-arginine(in) = L-arginine(out). It catalyses the reaction L-lysine(in) = L-lysine(out). The enzyme catalyses L-glutamate(out) = L-glutamate(in). In terms of biological role, plays an important role in the structural organization and integrity of the cell envelope, bridging the outer membrane to the peptidoglyan layer. Is a highly abundant molecule in the D.radiodurans cell envelope but is not a fundamental component of the S-layer. Binds the carotenoid deinoxanthin, a strong protective antioxidant specific of this bacterium, and could be part of the first lane of defense against UV radiation, especially under desiccation. Appears to be a nonselective channel. Is able to transport charged amino acids such as Lys, Arg and Glu; the large dimension of the pore points toward the physiological importance of the SDBC complex in assisting and allowing the exchange of substances, including nutrients, with the surrounding environment. This chain is Outer membrane protein SlpA, found in Deinococcus radiodurans (strain ATCC 13939 / DSM 20539 / JCM 16871 / CCUG 27074 / LMG 4051 / NBRC 15346 / NCIMB 9279 / VKM B-1422 / R1).